The chain runs to 82 residues: Myosin light chain alkali (82 aa).

The EF-hand domain occupies 7-42; sequence GCYEDFIECLKLYDKEENGTMLLAELQHALLALGEN.

Myosin is a hexamer of 2 heavy chains and 4 light chains.

The polypeptide is Myosin light chain alkali (Mlc1) (Drosophila teissieri (Fruit fly)).